A 788-amino-acid polypeptide reads, in one-letter code: Glycerol-3-phosphate acyltransferase (788 aa).

Residues 104–135 (LLPGRDPYHPNPRQQRRILRSDPQRARVMAGE) are disordered. Positions 271–276 (SHRSYI) match the HXXXXD motif motif.

Belongs to the GPAT/DAPAT family.

The protein localises to the cell membrane. The enzyme catalyses sn-glycerol 3-phosphate + an acyl-CoA = a 1-acyl-sn-glycero-3-phosphate + CoA. It participates in phospholipid metabolism; CDP-diacylglycerol biosynthesis; CDP-diacylglycerol from sn-glycerol 3-phosphate: step 1/3. In Mycobacterium marinum (strain ATCC BAA-535 / M), this protein is Glycerol-3-phosphate acyltransferase.